The following is a 1313-amino-acid chain: Envelopment polyprotein (1313 aa).

Positions 1–17 are cleaved as a signal peptide; it reads MIFTILNVLTRAMLVMS. Topologically, residues 18-712 are lumenal; it reads MYSLTTWDST…HSTLSAILTS (695 aa). N-linked (GlcNAc...) asparagine; by host glycans are attached at residues Asn-76 and Asn-102. Residues 178 to 237 are a coiled coil; the sequence is MQVLMSEIEQLKNQLSKKRNERGQEKRDAEKVMSDLMARNSDLRKHNDILTAEISQMKNK. Residues 250–270 form an internal signal sequence for glycoprotein N region; it reads TVVPAILSVALLSSSVAPIIA. Intrachain disulfides connect Cys-303/Cys-312, Cys-352/Cys-362, Cys-373/Cys-404, Cys-394/Cys-407, Cys-432/Cys-579, Cys-450/Cys-460, Cys-501/Cys-557, Cys-525/Cys-536, Cys-543/Cys-548, Cys-602/Cys-605, Cys-609/Cys-679, and Cys-629/Cys-634. N-linked (GlcNAc...) asparagine; by host glycosylation occurs at Asn-496. Residues 713–733 traverse the membrane as a helical segment; that stretch reads FLLILFIYTVFSVTTNILYVL. The tract at residues 731–773 is golgi retention signal; the sequence is YVLRLIPKQLKSPVGWLKLFINWLLTALRIKTRNVMRRINQRI. The Cytoplasmic segment spans residues 734 to 791; that stretch reads RLIPKQLKSPVGWLKLFINWLLTALRIKTRNVMRRINQRIGWVDHHDVERPRHREPMR. Residues 769 to 773 are important for correct targeting of the glycoproteins to the Golgi complex but not for heterodimerization; that stretch reads INQRI. The tract at residues 793–809 is internal signal sequence for glycoprotein C; that stretch reads FKTTLLLTLIMMTGGNA. 12 cysteine pairs are disulfide-bonded: Cys-810–Cys-850, Cys-823–Cys-832, Cys-875–Cys-971, Cys-890–Cys-1084, Cys-896–Cys-944, Cys-902–Cys-951, Cys-907–Cys-933, Cys-937–Cys-942, Cys-1053–Cys-1066, Cys-1148–Cys-1220, Cys-1158–Cys-1161, and Cys-1168–Cys-1202. Residues 810–1278 lie on the Lumenal side of the membrane; that stretch reads CSNTVVANSK…LDWLGGPMKA (469 aa). The segment at 896–902 is fusion loop; that stretch reads CHLVGDC. A fusion loop region spans residues 938 to 949; that stretch reads GAIGCGCFNINP. Asn-1154 is a glycosylation site (N-linked (GlcNAc...) asparagine; by host). Asn-1243 carries an N-linked (GlcNAc...) asparagine; by host glycan. The chain crosses the membrane as a helical span at residues 1279-1299; sequence ILKILGFIAIGIVCFVLFMIL. Over 1300–1313 the chain is Cytoplasmic; the sequence is IRIAVNSINIKKKN.

The protein belongs to the phlebovirus envelope glycoprotein family. Heterodimer with glycoprotein C. Interacts with nucleocapsid protein N and with the polymerase L in order to package them into virus particles. In terms of assembly, heterodimer with glycoprotein C. Homotrimer (postfusion). Interacts with nucleocapsid protein N and with the polymerase L in order to package them into virus particles. Interacts with host E3 ubiquitin-protein ligase UBR4; this interaction is important for viral RNA production. In terms of processing, specific enzymatic cleavages in vivo yield mature proteins including NSm protein, Glycoprotein C, and Glycoprotein N. Post-translationally, glycosylated. The glycans can attach to host CD209/DC-SIGN, and may play a role in virus entry into dendritic cells. Palmitoylated.

Its subcellular location is the virion membrane. The protein resides in the host Golgi apparatus membrane. The protein localises to the host endoplasmic reticulum membrane. Structural component of the virion that interacts with glycoprotein C. It shields the hydrophobic fusion loops of the glycoprotein C, preventing premature fusion. The glycoprotein protrusions are arranged on an icosahedral lattice, with T=12 triangulation. They are able to attach the virion to the host cell receptor CD209/DC-SIGN and to promote fusion of membranes with the late endosome after endocytosis of the virion. Plays a role in the packaging of ribonucleoproteins and polymerase during virus assembly. In terms of biological role, structural component of the virion that interacts with glycoprotein N. Acts as a class II fusion protein that is activated upon acidification and subsequent repositioning of the glycoprotein N. The glycoprotein protrusions are arranged on an icosahedral lattice, with T=12 triangulation. They are able to attach the virion to the host cell receptor CD209/DC-SIGN and to promote fusion of membranes with the late endosome after endocytosis of the virion. Functionally, plays a role for virus dissemination in mosquitoes. In Homo sapiens (Human), this protein is Envelopment polyprotein (GP).